We begin with the raw amino-acid sequence, 159 residues long: Transcriptional repressor NrdR (159 aa).

Residues 3-34 fold into a zinc finger; the sequence is CPFCRHEDTQVVDSRVSEDGAAIRRRRRCSAC. Residues 49-139 enclose the ATP-cone domain; it reads PAVVKKDGSR…VYRRFEDVSE (91 aa).

Belongs to the NrdR family. It depends on Zn(2+) as a cofactor.

Its function is as follows. Negatively regulates transcription of bacterial ribonucleotide reductase nrd genes and operons by binding to NrdR-boxes. The protein is Transcriptional repressor NrdR of Burkholderia multivorans (strain ATCC 17616 / 249).